We begin with the raw amino-acid sequence, 1342 residues long: MSDCNSGGGERRPNARATDAPPVRAPSGGAFRCRGCGACVILIAKYNPKTDEVTEFNASSCLTLLYSIHFCSIITTEGLGNTKDGFHAIQKRMSGFHASQCGFCTPGMCMSIFSSLVNADKSKKPDPPKGFSKLSVSEAERSFSGNMCRCTGYRPIVDACKSFASDVDLEDLGLNIFWKKGDKHPDPTKLPSYTLGGGICTFPDFLKSEIKSSIDFNDASISSPREGWYCPKNIKQYYKLVNSGLFSESSVKVVVGNTSTGVYKDQDLYDKYIDIAGIPELSAIVRKDKGIEIGAATSISRTIEILNQESESTSSPNGSVVFRKLAEHMSKVASPFVRNTASIGGNIILAHKYPFRSDIATILLGAAATVNLQVSSKTLHVTLEQFLEQPPLGHNTLLLSIFIPHWASDCKKEHTLVFETYRAAPRPLGNAVSYVNSAFLGHVSLDKSSGDNILSNLHLAFGAYGTEHAIRARKVEEYLTGKILSASVVLEAIRLLRETIVPVEGTTHPEYRVSVAVGFLFSFLSPLCKGVIEPGKTLSISEDLVHTDNVHNMPLSSRRETLSGDEYKPVGDPIKKYKVELQASGEAIYVDDIPAPKNCLYGEFIYSTQPLANVKSIKFKPSLASKKILTVVSAKDIPTGGRNIGSTFLFGDEEPLFGDPIAEFAGQALGVVIAETQRYADMAAKQAVVEYTTDGLKAPILTVEQAVQNNSYFQVPPERAPKQVGDFSKGMAEADHKIMSEEVKLASQYYFYMETQTALAIPDEDNTMTVYSSSQFPELAQNVISKCLGIPFNNVRVITRRAGGGFGGKAVRSLHIATAAALCAHTLRRPVRMYLNRNTDMIMVGGRHPMKARYSVGFKSDGKITALHLDLLINAGISADASPVIPGTIISGLKKYNWGALSFDVKLCKTNNTSKSVMRAPGDTQGSFIAEAIIEHVAAILSLDANTVRQKNFHTYDSLVLFYPDSAGESSTYTLHSIFDRLASTSRYLQRVESIKKFNSTNKWRKRGISSVPLIFKVEPRPAPGRVSVLNDGSIVVEVGGVELGQGLWTKVQQMTAFALGQLWPKGCEGLLDRIRVLQSDTLNLIQGGLTAGSTTSESSCAATLQACNMLIERLKPVMERLQLQSDTVSWDTLISQASQENINLSASAYWVPEQDSNFYLNYGAGTSEVEVDLLTGAITIIRSDLIYDCGKSLNPAVDLGQIEGSFIQGIGFFIYEEHQTNSDGLVISNSTWDYKIPSVDTIPKQFNAEVLNTGYHKHRVLSSKASGEPAVVLGASVHCAVREAIRAARIEFAGNNGSGSSLLTFQLDVPAPMTVVKELCGLDIVEKYLEDLSNRGAASGN.

Residues 1–23 (MSDCNSGGGERRPNARATDAPPV) are disordered. The 188-residue stretch at 221–408 (ISSPREGWYC…LSIFIPHWAS (188 aa)) folds into the FAD-binding PCMH-type domain.

This sequence belongs to the xanthine dehydrogenase family.

In Oryza sativa subsp. japonica (Rice), this protein is Putative aldehyde oxidase-like protein.